The chain runs to 357 residues: Holliday junction branch migration complex subunit RuvB (357 aa).

Over residues 1-15 (MAIQSDSLSSLPDSP) the composition is skewed to low complexity. A disordered region spans residues 1-30 (MAIQSDSLSSLPDSPRIVAPQPVSPNEESI). A large ATPase domain (RuvB-L) region spans residues 13 to 195 (DSPRIVAPQP…FGIVSRLEFY (183 aa)). ATP-binding positions include Leu34, Arg35, Gly76, Lys79, Thr80, Thr81, 142 to 144 (EDF), Arg185, Tyr195, and Arg232. Thr80 contributes to the Mg(2+) binding site. The interval 196–266 (NTDELARIVT…AAGRALAMLD (71 aa)) is small ATPAse domain (RuvB-S). The tract at residues 269–357 (PQGLDVMDRK…SGGTGELFSK (89 aa)) is head domain (RuvB-H). DNA-binding residues include Arg305, Arg324, and Arg329.

Belongs to the RuvB family. In terms of assembly, homohexamer. Forms an RuvA(8)-RuvB(12)-Holliday junction (HJ) complex. HJ DNA is sandwiched between 2 RuvA tetramers; dsDNA enters through RuvA and exits via RuvB. An RuvB hexamer assembles on each DNA strand where it exits the tetramer. Each RuvB hexamer is contacted by two RuvA subunits (via domain III) on 2 adjacent RuvB subunits; this complex drives branch migration. In the full resolvosome a probable DNA-RuvA(4)-RuvB(12)-RuvC(2) complex forms which resolves the HJ.

The protein localises to the cytoplasm. It catalyses the reaction ATP + H2O = ADP + phosphate + H(+). Its function is as follows. The RuvA-RuvB-RuvC complex processes Holliday junction (HJ) DNA during genetic recombination and DNA repair, while the RuvA-RuvB complex plays an important role in the rescue of blocked DNA replication forks via replication fork reversal (RFR). RuvA specifically binds to HJ cruciform DNA, conferring on it an open structure. The RuvB hexamer acts as an ATP-dependent pump, pulling dsDNA into and through the RuvAB complex. RuvB forms 2 homohexamers on either side of HJ DNA bound by 1 or 2 RuvA tetramers; 4 subunits per hexamer contact DNA at a time. Coordinated motions by a converter formed by DNA-disengaged RuvB subunits stimulates ATP hydrolysis and nucleotide exchange. Immobilization of the converter enables RuvB to convert the ATP-contained energy into a lever motion, pulling 2 nucleotides of DNA out of the RuvA tetramer per ATP hydrolyzed, thus driving DNA branch migration. The RuvB motors rotate together with the DNA substrate, which together with the progressing nucleotide cycle form the mechanistic basis for DNA recombination by continuous HJ branch migration. Branch migration allows RuvC to scan DNA until it finds its consensus sequence, where it cleaves and resolves cruciform DNA. This Bordetella pertussis (strain Tohama I / ATCC BAA-589 / NCTC 13251) protein is Holliday junction branch migration complex subunit RuvB.